The chain runs to 806 residues: Acetyl-CoA decarbonylase/synthase complex subunit alpha 1 (806 aa).

Positions 73, 76, 77, 79, 84, and 94 each coordinate [4Fe-4S] cluster. H117 contributes to the CO binding site. Residues H250, C278, and C323 each coordinate [Ni-4Fe-4S] cluster. 4Fe-4S ferredoxin-type domains are found at residues 407–436 (DEEFTNWVMKCADCGACMIACPEELDIPEA) and 446–475 (SYLDILHDQCIGCRRCEQVCKKEIPILNII). [4Fe-4S] cluster-binding residues include C417, C420, C423, C427, C455, C458, C461, and C465. C523, C552, and C587 together coordinate [Ni-4Fe-4S] cluster.

Belongs to the Ni-containing carbon monoxide dehydrogenase family. In terms of assembly, heterotetramer of two alpha and two epsilon subunits. The ACDS complex is made up of alpha, epsilon, beta, gamma and delta subunits with a probable stoichiometry of (alpha(2)epsilon(2))(4)-beta(8)-(gamma(1)delta(1))(8). [4Fe-4S] cluster serves as cofactor. [Ni-4Fe-4S] cluster is required as a cofactor.

The enzyme catalyses CO + 2 oxidized [2Fe-2S]-[ferredoxin] + H2O = 2 reduced [2Fe-2S]-[ferredoxin] + CO2 + 2 H(+). Its pathway is one-carbon metabolism; methanogenesis from acetate. Carbon monoxide dehydrogenase activity is inhibited by KCN and is rapidly inactivated by O(2). Its function is as follows. Part of the ACDS complex that catalyzes the reversible cleavage of acetyl-CoA, allowing growth on acetate as sole source of carbon and energy. The alpha-epsilon subcomponent functions as a carbon monoxide dehydrogenase. The chain is Acetyl-CoA decarbonylase/synthase complex subunit alpha 1 from Methanosarcina barkeri (strain Fusaro / DSM 804).